The primary structure comprises 206 residues: Thymidylate kinase (206 aa).

ATP is bound at residue 14–21 (GGEGIGKS).

The protein belongs to the thymidylate kinase family.

It carries out the reaction dTMP + ATP = dTDP + ADP. Phosphorylation of dTMP to form dTDP in both de novo and salvage pathways of dTTP synthesis. The chain is Thymidylate kinase from Rickettsia bellii (strain OSU 85-389).